The chain runs to 324 residues: UDP-galactose transporter homolog 1 (324 aa).

The next 2 helical transmembrane spans lie at 7–27 and 42–62; these read LVIA…AQEP and HSSF…LCYL. A glycan (N-linked (GlcNAc...) asparagine) is linked at N97. Transmembrane regions (helical) follow at residues 106-126, 135-155, 161-181, 199-219, 237-257, 265-285, and 290-310; these read VGYM…HVLV, KALV…GGAE, ASLY…LTNA, HLMV…LVLF, ILTY…FVFF, LVLA…SIVV, and VRPV…WETV.

The protein belongs to the nucleotide-sugar transporter family. SLC35B subfamily.

It is found in the endoplasmic reticulum membrane. Its function is as follows. May be involved in specific transport of UDP-Gal from the cytosol to the Golgi lumen. Involved in the maintenance of optimal conditions for the folding of secretory pathway proteins in the endoplasmic reticulum. This is UDP-galactose transporter homolog 1 (HUT1) from Eremothecium gossypii (strain ATCC 10895 / CBS 109.51 / FGSC 9923 / NRRL Y-1056) (Yeast).